A 213-amino-acid chain; its full sequence is Probable nicotinate-nucleotide adenylyltransferase (213 aa).

The tract at residues 194–213 (RKPNNGEAKDGDVKDEEAVR) is disordered. The span at 200–213 (EAKDGDVKDEEAVR) shows a compositional bias: basic and acidic residues.

Belongs to the NadD family.

It catalyses the reaction nicotinate beta-D-ribonucleotide + ATP + H(+) = deamido-NAD(+) + diphosphate. Its pathway is cofactor biosynthesis; NAD(+) biosynthesis; deamido-NAD(+) from nicotinate D-ribonucleotide: step 1/1. In terms of biological role, catalyzes the reversible adenylation of nicotinate mononucleotide (NaMN) to nicotinic acid adenine dinucleotide (NaAD). This is Probable nicotinate-nucleotide adenylyltransferase from Mycolicibacterium smegmatis (strain ATCC 700084 / mc(2)155) (Mycobacterium smegmatis).